Reading from the N-terminus, the 287-residue chain is Uroplakin-3a (287 aa).

Residues 1 to 18 form the signal peptide; sequence MLLLWALLALGCLRCGWT. The Lumenal portion of the chain corresponds to 19-207; that stretch reads VNLQPQLASV…DTWPGRRSGG (189 aa). N-linked (GlcNAc...) asparagine glycosylation is found at N74, N139, and N170. Residues 208 to 235 traverse the membrane as a helical segment; it reads MIVITSILGSLPFFLLVGFAGAIILSFV. The Cytoplasmic portion of the chain corresponds to 236–287; the sequence is DMGSSDGEMTHDSQITQEAVPKTLGTSEPSYSSVNRGPPLDRAEVFSSKLQD. Positions 243-287 are disordered; it reads EMTHDSQITQEAVPKTLGTSEPSYSSVNRGPPLDRAEVFSSKLQD. The segment covering 259-270 has biased composition (polar residues); that stretch reads LGTSEPSYSSVN.

Belongs to the uroplakin-3 family. As to quaternary structure, heterodimer with uroplakin-1B (UPK1B).

The protein resides in the endoplasmic reticulum membrane. Functionally, component of the asymmetric unit membrane (AUM); a highly specialized biomembrane elaborated by terminally differentiated urothelial cells. May play an important role in AUM-cytoskeleton interaction in terminally differentiated urothelial cells. It also contributes to the formation of urothelial glycocalyx which may play an important role in preventing bacterial adherence. In Mus musculus (Mouse), this protein is Uroplakin-3a (Upk3a).